We begin with the raw amino-acid sequence, 420 residues long: UDP-N-acetylglucosamine 1-carboxyvinyltransferase (420 aa).

Residue 22 to 23 (KN) participates in phosphoenolpyruvate binding. Arg93 is a binding site for UDP-N-acetyl-alpha-D-glucosamine. The active-site Proton donor is Cys117. A 2-(S-cysteinyl)pyruvic acid O-phosphothioketal modification is found at Cys117. 2 residues coordinate UDP-N-acetyl-alpha-D-glucosamine: Asp307 and Ile329.

It belongs to the EPSP synthase family. MurA subfamily.

It is found in the cytoplasm. It catalyses the reaction phosphoenolpyruvate + UDP-N-acetyl-alpha-D-glucosamine = UDP-N-acetyl-3-O-(1-carboxyvinyl)-alpha-D-glucosamine + phosphate. It participates in cell wall biogenesis; peptidoglycan biosynthesis. Its function is as follows. Cell wall formation. Adds enolpyruvyl to UDP-N-acetylglucosamine. The chain is UDP-N-acetylglucosamine 1-carboxyvinyltransferase from Shewanella halifaxensis (strain HAW-EB4).